Here is a 121-residue protein sequence, read N- to C-terminus: MDWYLKVLKNYVGFRGRARRKEYWMFILVNIIFTFVLGLLDKMLGWQRAGGEGILTTIYGILVFLPWWAVQFRRLHDTDRSAWWALLFLIPFIGWLIIIVFNCQAGTPGENRFGPDPKLEP.

At 1 to 23 the chain is on the periplasmic side; it reads MDWYLKVLKNYVGFRGRARRKEY. Residues 24–44 form a helical membrane-spanning segment; sequence WMFILVNIIFTFVLGLLDKML. Topologically, residues 45–49 are cytoplasmic; sequence GWQRA. Residues 50–70 form a helical membrane-spanning segment; that stretch reads GGEGILTTIYGILVFLPWWAV. Topologically, residues 71-80 are periplasmic; it reads QFRRLHDTDR. Residues 81–101 form a helical membrane-spanning segment; that stretch reads SAWWALLFLIPFIGWLIIIVF. Over 102–121 the chain is Cytoplasmic; it reads NCQAGTPGENRFGPDPKLEP.

To E.coli YhaI.

Its subcellular location is the cell inner membrane. This chain is Inner membrane protein YhaH (yhaH), found in Escherichia coli O157:H7.